A 580-amino-acid polypeptide reads, in one-letter code: Pentatricopeptide repeat-containing protein At5g10690 (580 aa).

9 PPR repeats span residues 76 to 110 (NTIV…GGIG), 112 to 142 (DSIS…IEYG), 151 to 181 (SSSL…YDIL), 189 to 223 (SVLI…RLEP), 224 to 254 (DRLT…MKEK), 266 to 296 (DVVT…MKLC), 302 to 337 (DRTA…GANE), 342 to 376 (KPHL…SSGS), and 382 to 417 (QQEA…KTIP). Residues 486 to 553 (VPIVDDRGSC…IVVHCGNFSG (68 aa)) enclose the CBS domain.

The protein belongs to the PPR family. P subfamily.

The sequence is that of Pentatricopeptide repeat-containing protein At5g10690 (CBSPPR1) from Arabidopsis thaliana (Mouse-ear cress).